The sequence spans 779 residues: Membrane metallo-endopeptidase-like 1 (779 aa).

Residues 1–27 (MGKSEGPVGMVESAGRAGQKRPGFLEG) lie on the Cytoplasmic side of the membrane. Residues 28–48 (GLLLLLLLVTAALVALGVLYA) traverse the membrane as a helical; Signal-anchor for type II membrane protein segment. At 49–779 (DRRGKQLPRL…MHPKERCRVW (731 aa)) the chain is on the lumenal side. In terms of domain architecture, Peptidase M13 spans 88–779 (VCTTPGCVIA…MHPKERCRVW (692 aa)). Cystine bridges form between Cys89-Cys94, Cys112-Cys764, Cys120-Cys724, Cys175-Cys439, and Cys650-Cys776. Arg135 provides a ligand contact to a peptide. N-linked (GlcNAc...) asparagine glycans are attached at residues Asn177, Asn207, Asn350, and Asn530. A coiled-coil region spans residues 515–560 (LEEMNRRLDEEYSNLNFSEDLYFENSLQNLKVGAQRSLRKLREKVD). His613 is a binding site for Zn(2+). Glu614 is a catalytic residue. A Zn(2+)-binding site is contributed by His617. Asn657 carries N-linked (GlcNAc...) asparagine glycosylation. Zn(2+) is bound at residue Glu676. Asp680 serves as the catalytic Proton donor.

It belongs to the peptidase M13 family. It depends on Zn(2+) as a cofactor. Post-translationally, N-glycosylated. As to expression, predominantly expressed in testis. Weakly expressed in brain, kidney and heart.

Its subcellular location is the membrane. It is found in the secreted. It catalyses the reaction Preferential cleavage of polypeptides between hydrophobic residues, particularly with Phe or Tyr at P1'.. With respect to regulation, inhibited by thiorphan and phosphoramidon. In terms of biological role, metalloprotease involved in sperm function, possibly by modulating the processes of fertilization and early embryonic development. Degrades a broad variety of small peptides with a preference for peptides shorter than 3 kDa containing neutral bulky aliphatic or aromatic amino acid residues. Shares the same substrate specificity with MME and cleaves peptides at the same amide bond. The protein is Membrane metallo-endopeptidase-like 1 (MMEL1) of Homo sapiens (Human).